Reading from the N-terminus, the 319-residue chain is MITFLPIIFSILIVVIFVVGNFANGFIALVNSIEWVKRQKISFVDQILTALAVSRVGLLWVLLLHWYATQLNPAFYSVEVRITVYNVWAVTNHFSSWLATSLSMFYLLKIANFSNLIFLRIKRRVKSVVLVILLGPLLFLVCHLFVINMDETIWTKEYEGNMTWKIKLKSAMYHSNMTLTILANFVPLTLTLISFLLLICSLCKHLKKMQLHGKGSQDPSTKVHIKALQTVTSFLLLCAIYFLSMIISVCNLGRLQKQPVFMFCQAIIFSYPSTHPFILILGNKKLKQIFLSVLWHVRYWVKDRSLRLHRFTRAALCKG.

Residue Met-1 is a topological domain, extracellular. A helical membrane pass occupies residues 2-22; that stretch reads ITFLPIIFSILIVVIFVVGNF. The Cytoplasmic segment spans residues 23–46; sequence ANGFIALVNSIEWVKRQKISFVDQ. A helical transmembrane segment spans residues 47–67; it reads ILTALAVSRVGLLWVLLLHWY. The Extracellular portion of the chain corresponds to 68–86; that stretch reads ATQLNPAFYSVEVRITVYN. A helical transmembrane segment spans residues 87–107; it reads VWAVTNHFSSWLATSLSMFYL. Over 108–126 the chain is Cytoplasmic; sequence LKIANFSNLIFLRIKRRVK. Residues 127–147 traverse the membrane as a helical segment; the sequence is SVVLVILLGPLLFLVCHLFVI. The Extracellular segment spans residues 148–178; that stretch reads NMDETIWTKEYEGNMTWKIKLKSAMYHSNMT. 2 N-linked (GlcNAc...) asparagine glycosylation sites follow: Asn-161 and Asn-176. A helical membrane pass occupies residues 179 to 199; that stretch reads LTILANFVPLTLTLISFLLLI. At 200-229 the chain is on the cytoplasmic side; that stretch reads CSLCKHLKKMQLHGKGSQDPSTKVHIKALQ. The helical transmembrane segment at 230–250 threads the bilayer; it reads TVTSFLLLCAIYFLSMIISVC. The Extracellular portion of the chain corresponds to 251 to 259; it reads NLGRLQKQP. The helical transmembrane segment at 260–280 threads the bilayer; the sequence is VFMFCQAIIFSYPSTHPFILI. The Cytoplasmic portion of the chain corresponds to 281–319; sequence LGNKKLKQIFLSVLWHVRYWVKDRSLRLHRFTRAALCKG.

Belongs to the G-protein coupled receptor T2R family.

The protein resides in the membrane. Functionally, receptor that may play a role in the perception of bitterness and is gustducin-linked. May play a role in sensing the chemical composition of the gastrointestinal content. The activity of this receptor may stimulate alpha gustducin, mediate PLC-beta-2 activation and lead to the gating of TRPM5. In Pan paniscus (Pygmy chimpanzee), this protein is Taste receptor type 2 member 30 (TAS2R30).